The following is a 97-amino-acid chain: YcgL domain-containing protein PputGB1_4120 (97 aa).

In terms of domain architecture, YcgL spans 3 to 87 (RICSIYKSPR…AEDEYIEHLP (85 aa)).

This chain is YcgL domain-containing protein PputGB1_4120, found in Pseudomonas putida (strain GB-1).